The sequence spans 362 residues: Putative HLA class I histocompatibility antigen, alpha chain H (362 aa).

The signal sequence occupies residues 1–24; sequence MVLMAPRTLLLLLSGALALTQTWA. Residues 25-114 form an alpha-1 region; the sequence is RSHSMRYFYT…ALRYYNQSEG (90 aa). The Extracellular segment spans residues 25-308; sequence RSHSMRYFYT…EPSSQPTVPI (284 aa). N110 carries an N-linked (GlcNAc...) asparagine glycan. The segment at 115-206 is alpha-2; the sequence is GSHTMQVMYG…ENGKETLQRA (92 aa). The tract at residues 207–298 is alpha-3; the sequence is DPPKTHMTHH…GLPEPLTLRW (92 aa). An Ig-like C1-type domain is found at 209 to 297; sequence PKTHMTHHPI…EGLPEPLTLR (89 aa). C227 and C283 are joined by a disulfide. Residues 299–308 are connecting peptide; it reads EPSSQPTVPI. A helical membrane pass occupies residues 309-332; it reads VGIVAGLVLLVAVVTGAVVAAVMW. Topologically, residues 333–362 are cytoplasmic; that stretch reads RKKSSDRKGGSYSQAASSNSAQGSDVSLTA. A disordered region spans residues 337 to 362; that stretch reads SDRKGGSYSQAASSNSAQGSDVSLTA. Residues 342 to 356 show a composition bias toward low complexity; that stretch reads GSYSQAASSNSAQGS.

Belongs to the MHC class I family. Heterodimer of an alpha chain and a beta chain (beta-2-microglobulin).

The protein resides in the cell membrane. Its function is as follows. Involved in the presentation of foreign antigens to the immune system. This chain is Putative HLA class I histocompatibility antigen, alpha chain H (HLA-H), found in Homo sapiens (Human).